The primary structure comprises 302 residues: Phosphoribosylaminoimidazole-succinocarboxamide synthase (302 aa).

Belongs to the SAICAR synthetase family.

The enzyme catalyses 5-amino-1-(5-phospho-D-ribosyl)imidazole-4-carboxylate + L-aspartate + ATP = (2S)-2-[5-amino-1-(5-phospho-beta-D-ribosyl)imidazole-4-carboxamido]succinate + ADP + phosphate + 2 H(+). The protein operates within purine metabolism; IMP biosynthesis via de novo pathway; 5-amino-1-(5-phospho-D-ribosyl)imidazole-4-carboxamide from 5-amino-1-(5-phospho-D-ribosyl)imidazole-4-carboxylate: step 1/2. The protein is Phosphoribosylaminoimidazole-succinocarboxamide synthase of Cupriavidus taiwanensis (strain DSM 17343 / BCRC 17206 / CCUG 44338 / CIP 107171 / LMG 19424 / R1) (Ralstonia taiwanensis (strain LMG 19424)).